We begin with the raw amino-acid sequence, 352 residues long: Endophilin-A1 (352 aa).

The tract at residues 1 to 21 is membrane-binding amphipathic helix; it reads MSVAGLKKQFHKATQKVSEKV. The segment at 1–27 is disordered; the sequence is MSVAGLKKQFHKATQKVSEKVGGAEGT. The segment at 1 to 125 is binds and tubulates liposomes; that stretch reads MSVAGLKKQF…EVGEAMRELS (125 aa). The 232-residue stretch at 18 to 249 folds into the BAR domain; the sequence is SEKVGGAEGT…LEERIRQASS (232 aa). Positions 60–87 are required for dimerization upon membrane association; sequence PNPASRAKLSMINTMSKIRGQEKGPGYP. Residues 181–248 are a coiled coil; that stretch reads EELRQALEKF…RLEERIRQAS (68 aa). Position 262 is a phosphoserine (Ser-262). The interval 264–289 is disordered; sequence EFATGDSTQPNGGLSHTGTPKPPGVQ. Residues 268 to 281 show a composition bias toward polar residues; the sequence is GDSTQPNGGLSHTG. Residues 290–349 form the SH3 domain; that stretch reads MDQPCCRALYDFEPENEGELGFKEGDIITLTNQIDENWYEGMLHGQSGFFPINYVEILVA. Tyr-299 is subject to Phosphotyrosine.

Belongs to the endophilin family. As to quaternary structure, monomer; in cytoplasm. Homodimer; when associated with membranes. Interacts with SYNJ1. Interacts with DNM1. Interacts with MAP4K3; the interaction appears to regulate MAP4K3-mediated JNK activation. Interacts with OPHN1. Interacts with PDCD6IP. Interacts with BIN2. Interacts with ATXN2. Interacts with ADAM9 and ADAM15 cytoplasmic tails. Interacts with TMEM108. Interacts with ADGRB2.

The protein localises to the cytoplasm. It is found in the membrane. The protein resides in the early endosome. It localises to the presynapse. Implicated in synaptic vesicle endocytosis. May recruit other proteins to membranes with high curvature. Required for BDNF-dependent dendrite outgrowth. Cooperates with SH3GL2 to mediate BDNF-NTRK2 early endocytic trafficking and signaling from early endosomes. This Mus musculus (Mouse) protein is Endophilin-A1 (Sh3gl2).